Reading from the N-terminus, the 1452-residue chain is ABC-type transporter adrC (1452 aa).

The disordered stretch occupies residues Met1 to Asn38. Polar residues predominate over residues Ser19–Glu28. One can recognise an ABC transporter 1 domain in the interval Lys116–Pro378. 6 consecutive transmembrane segments (helical) span residues Ile487–Leu507, Val524–Tyr544, Val569–Phe589, Ser598–Phe618, Ala631–Pro651, and Gly738–Ile758. Residues Phe813–Gly1055 enclose the ABC transporter 2 domain. Residue Gly849–Thr856 coordinates ATP. The next 7 helical transmembrane spans lie at Tyr1149–Trp1169, Val1181–Pro1201, Val1224–Thr1244, Leu1264–Val1284, Val1287–Phe1307, Ile1322–Gly1344, and Phe1415–Leu1435.

The protein belongs to the ABC transporter superfamily. ABCG family. PDR (TC 3.A.1.205) subfamily.

The protein resides in the membrane. ABC-type transporter; part of the gene cluster that mediates the biosynthesis of the meroterpenoid compound andrastin A, a promising antitumoral compound. Is required for the production of andrastin A but does not have a significant role in its secretion. This Penicillium roqueforti protein is ABC-type transporter adrC.